Reading from the N-terminus, the 704-residue chain is Elongation factor G (704 aa).

In terms of domain architecture, tr-type G spans alanine 9–leucine 285. Residues alanine 18–threonine 25, aspartate 82–histidine 86, and asparagine 136–aspartate 139 each bind GTP.

It belongs to the TRAFAC class translation factor GTPase superfamily. Classic translation factor GTPase family. EF-G/EF-2 subfamily.

It is found in the cytoplasm. Functionally, catalyzes the GTP-dependent ribosomal translocation step during translation elongation. During this step, the ribosome changes from the pre-translocational (PRE) to the post-translocational (POST) state as the newly formed A-site-bound peptidyl-tRNA and P-site-bound deacylated tRNA move to the P and E sites, respectively. Catalyzes the coordinated movement of the two tRNA molecules, the mRNA and conformational changes in the ribosome. The polypeptide is Elongation factor G (Thermobifida fusca (strain YX)).